Consider the following 217-residue polypeptide: Transcriptional regulator NovE (217 aa).

Residues 1-41 form a disordered region; the sequence is MVASGRTASKGRGNGATPVRPTAGDATPVDSGQPSDTTYGG.

Its function is as follows. Transcription regulator that specifically regulates expression of genes involved in the novobiocin biosynthesis pathway. Probably acts as a positive regulator of transcription. Does not bind DNA. The chain is Transcriptional regulator NovE (novE) from Streptomyces niveus (Streptomyces spheroides).